Reading from the N-terminus, the 132-residue chain is Phosphoribosyl-AMP cyclohydrolase (132 aa).

D82 serves as a coordination point for Mg(2+). Zn(2+) is bound at residue C83. Mg(2+) is bound by residues D84 and D86. Residues C99 and C106 each contribute to the Zn(2+) site.

Belongs to the PRA-CH family. Homodimer. Requires Mg(2+) as cofactor. Zn(2+) is required as a cofactor.

It localises to the cytoplasm. It carries out the reaction 1-(5-phospho-beta-D-ribosyl)-5'-AMP + H2O = 1-(5-phospho-beta-D-ribosyl)-5-[(5-phospho-beta-D-ribosylamino)methylideneamino]imidazole-4-carboxamide. It participates in amino-acid biosynthesis; L-histidine biosynthesis; L-histidine from 5-phospho-alpha-D-ribose 1-diphosphate: step 3/9. Functionally, catalyzes the hydrolysis of the adenine ring of phosphoribosyl-AMP. The polypeptide is Phosphoribosyl-AMP cyclohydrolase (Paramagnetospirillum magneticum (strain ATCC 700264 / AMB-1) (Magnetospirillum magneticum)).